A 235-amino-acid chain; its full sequence is MNTSIKNWPEQERPRERLLQQGPQSLSDSELLAIFLRSGSRQHSAVELARLLIQQFGSLNAVFDASYNELAQFNGIGATKYSQLLAVKELGRRYLDYHFSQTELSLHSSHLVLDYLRYELKGEKQEVFAVLCLDAELRKLHFKKLFFGSVQHCAVSVNQTLRYALQQHACQLVIAHNHPFGSPQPSPEDIKLTQQLEQACQLVEIRLLDHFIISPEGSFSFAEQQLLNPTSIAVQ.

The segment at 1–20 (MNTSIKNWPEQERPRERLLQ) is disordered. Residues 9–18 (PEQERPRERL) are compositionally biased toward basic and acidic residues. The region spanning 105 to 227 (SLHSSHLVLD…SFSFAEQQLL (123 aa)) is the MPN domain. Histidine 176, histidine 178, and aspartate 189 together coordinate Zn(2+). Residues 176–189 (HNHPFGSPQPSPED) carry the JAMM motif motif.

It belongs to the UPF0758 family.

The polypeptide is UPF0758 protein A1S_2918 (Acinetobacter baumannii (strain ATCC 17978 / DSM 105126 / CIP 53.77 / LMG 1025 / NCDC KC755 / 5377)).